The following is a 1413-amino-acid chain: DNA-directed RNA polymerase subunit beta' (1413 aa).

Residues Cys-72, Cys-74, Cys-87, and Cys-90 each contribute to the Zn(2+) site. The Mg(2+) site is built by Asp-463, Asp-465, and Asp-467. Zn(2+) is bound by residues Cys-811, Cys-885, Cys-892, and Cys-895.

It belongs to the RNA polymerase beta' chain family. As to quaternary structure, the RNAP catalytic core consists of 2 alpha, 1 beta, 1 beta' and 1 omega subunit. When a sigma factor is associated with the core the holoenzyme is formed, which can initiate transcription. The cofactor is Mg(2+). Requires Zn(2+) as cofactor.

The enzyme catalyses RNA(n) + a ribonucleoside 5'-triphosphate = RNA(n+1) + diphosphate. Its function is as follows. DNA-dependent RNA polymerase catalyzes the transcription of DNA into RNA using the four ribonucleoside triphosphates as substrates. This is DNA-directed RNA polymerase subunit beta' from Ruegeria pomeroyi (strain ATCC 700808 / DSM 15171 / DSS-3) (Silicibacter pomeroyi).